Reading from the N-terminus, the 494-residue chain is Poly(3-hydroxybutyrate) depolymerase (494 aa).

The signal sequence occupies residues 1-25; sequence MAFNFIRAAAAGAAMALCGVGSVHA. S45 (nucleophile) is an active-site residue. Active-site charge relay system residues include D132 and H166. The region spanning 347 to 431 is the Fibronectin type-III domain; sequence APTGVSTSGA…AAASGTTLAA (85 aa).

Belongs to the AB hydrolase superfamily. Lipase family.

It is found in the secreted. It catalyses the reaction [(3R)-hydroxybutanoate](n) + H2O = [(3R)-hydroxybutanoate](n-2) + (3R)-hydroxybutanoate dimer + H(+). It carries out the reaction [(3R)-hydroxybutanoate](n) + H2O = [(3R)-hydroxybutanoate](n-1) + (R)-3-hydroxybutanoate + H(+). The enzyme catalyses (3R)-hydroxybutanoate dimer + H2O = 2 (R)-3-hydroxybutanoate + H(+). Catalyzes the hydrolysis of poly(3-hydroxybutyrate) (PHB) film, producing the monomer and dimer of 3-hydroxybutyrate (3HB), while the 3HB trimer and tetramer are not formed. The chain is Poly(3-hydroxybutyrate) depolymerase from Delftia acidovorans (Pseudomonas acidovorans).